The primary structure comprises 227 residues: MPMHSPALPMLHLMRLVSPSQPVGAFSYSRGLEWAVHAGTVTNEESCAGWVFGLLEHSYAVLDGAIFWRMISALMRNDDAEFCRLNDWLGASRESSELELEDRRMGESLRTLLSELGVERARSFASEQRATYPAAFSIAACHWNIEPVDALRGLMWSVVESQIMAAIRLVPLGHTAGQRILIAGAAKIERAVEKARTLNDDEIGNTAPALAMASAWHETQYSRLFRS.

This sequence belongs to the UreF family. As to quaternary structure, ureD, UreF and UreG form a complex that acts as a GTP-hydrolysis-dependent molecular chaperone, activating the urease apoprotein by helping to assemble the nickel containing metallocenter of UreC. The UreE protein probably delivers the nickel.

Its subcellular location is the cytoplasm. Its function is as follows. Required for maturation of urease via the functional incorporation of the urease nickel metallocenter. The polypeptide is Urease accessory protein UreF 2 (Brucella anthropi (strain ATCC 49188 / DSM 6882 / CCUG 24695 / JCM 21032 / LMG 3331 / NBRC 15819 / NCTC 12168 / Alc 37) (Ochrobactrum anthropi)).